The following is a 354-amino-acid chain: Uroporphyrinogen decarboxylase (354 aa).

Substrate is bound by residues 27 to 31 (RQAGR), D77, Y154, T209, and H327.

Belongs to the uroporphyrinogen decarboxylase family. As to quaternary structure, homodimer.

The protein resides in the cytoplasm. It catalyses the reaction uroporphyrinogen III + 4 H(+) = coproporphyrinogen III + 4 CO2. It participates in porphyrin-containing compound metabolism; protoporphyrin-IX biosynthesis; coproporphyrinogen-III from 5-aminolevulinate: step 4/4. Its function is as follows. Catalyzes the decarboxylation of four acetate groups of uroporphyrinogen-III to yield coproporphyrinogen-III. This is Uroporphyrinogen decarboxylase from Pseudomonas putida (strain W619).